The following is a 271-amino-acid chain: MNRSIGVLDSGVGGLTVARELMRQLPHEQIIYVGDTLRCPYGPRPEEEIRQFTWEMIDFLVAQGVKLIVIACNTATAVVLKEARQKLSIPVIGVIDPGARAAVKVTRSKRIGVIGTKMTIESNSYEKALRHVEGQVVVESLSCPPFVPLVESSQTSGPYVERVVANTLKPLLSYDMDTLILGCTHYPLLAEVIGRVIGPNVQLISSGDETALEVSALLDYNGITADLDRIPEHVYHATGDTRSFERIASDWLHHPVQAKRLVLGTEEEKCV.

Substrate-binding positions include 9-10 (DS) and 41-42 (YG). The Proton donor/acceptor role is filled by cysteine 72. Substrate is bound at residue 73-74 (NT). Cysteine 183 functions as the Proton donor/acceptor in the catalytic mechanism. 184-185 (TH) is a binding site for substrate.

Belongs to the aspartate/glutamate racemases family.

It catalyses the reaction L-glutamate = D-glutamate. It functions in the pathway cell wall biogenesis; peptidoglycan biosynthesis. In terms of biological role, provides the (R)-glutamate required for cell wall biosynthesis. This chain is Glutamate racemase, found in Exiguobacterium sibiricum (strain DSM 17290 / CCUG 55495 / CIP 109462 / JCM 13490 / 255-15).